A 271-amino-acid chain; its full sequence is Peroxiredoxin-4 (271 aa).

Positions 1 to 37 (MEALPLLAATTPDHGRHRRLLLLPLLLFLLPAGAVQG) are cleaved as a signal peptide. Positions 79–237 (AKISKPAPYW…TLRLVQAFQY (159 aa)) constitute a Thioredoxin domain. Residue C124 is the Cysteine sulfenic acid (-SOH) intermediate of the active site.

The protein belongs to the peroxiredoxin family. AhpC/Prx1 subfamily. Homodimer; disulfide-linked, upon oxidation. 5 homodimers assemble to form a ring-like decamer. Can form heterodimers with PRDX1. In terms of processing, the enzyme can be inactivated by further oxidation of the cysteine sulfenic acid (C(P)-SOH) to sulphinic acid (C(P)-SO2H) and sulphonic acid (C(P)-SO3H) instead of its condensation to a disulfide bond.

It is found in the cytoplasm. It localises to the endoplasmic reticulum. It carries out the reaction a hydroperoxide + [thioredoxin]-dithiol = an alcohol + [thioredoxin]-disulfide + H2O. Its function is as follows. Thiol-specific peroxidase that catalyzes the reduction of hydrogen peroxide and organic hydroperoxides to water and alcohols, respectively. Plays a role in cell protection against oxidative stress by detoxifying peroxides and as sensor of hydrogen peroxide-mediated signaling events. Regulates the activation of NF-kappa-B in the cytosol by a modulation of I-kappa-B-alpha phosphorylation. The sequence is that of Peroxiredoxin-4 (PRDX4) from Homo sapiens (Human).